An 836-amino-acid polypeptide reads, in one-letter code: Protein-glutamine gamma-glutamyltransferase K (836 aa).

Residues 1 to 33 (MDGPRSDMGRSDVSRSDMSRSDMGRSDMGRSDV) show a composition bias toward basic and acidic residues. Disordered regions lie at residues 1–68 (MDGP…SRGG) and 89–125 (DDWG…DGTI). Position 46 is a phosphothreonine (threonine 46). Serine 48, serine 98, and serine 112 each carry phosphoserine. The segment covering 89–112 (DDWGREPSDSRDRGSSSRGGRPDS) has biased composition (basic and acidic residues). Catalysis depends on residues cysteine 397, histidine 456, and aspartate 479. Ca(2+)-binding residues include asparagine 519, aspartate 521, glutamate 568, and glutamate 573. Position 824 is a phosphoserine (serine 824).

The protein belongs to the transglutaminase superfamily. Transglutaminase family. In terms of assembly, interacts with PLAAT4. The cofactor is Ca(2+). Post-translationally, palmitoylated. In terms of processing, the membrane anchorage region possesses a cluster of five cysteines within which fatty acid(s) may become thioester-linked. It is subject to phorbol ester-stimulated phosphorylation and is hypersensitive to proteolysis, which releases the enzyme in a soluble form. Tyrosine-phosphorylated.

It localises to the membrane. It catalyses the reaction L-glutaminyl-[protein] + L-lysyl-[protein] = [protein]-L-lysyl-N(6)-5-L-glutamyl-[protein] + NH4(+). Its activity is regulated as follows. Inhibited by retinoic acid, but phorbol ester treatment activates it. Its function is as follows. Catalyzes the cross-linking of proteins and the conjugation of polyamines to proteins. Responsible for cross-linking epidermal proteins during formation of the stratum corneum. Involved in cell proliferation. This is Protein-glutamine gamma-glutamyltransferase K (TGM1) from Oryctolagus cuniculus (Rabbit).